Here is a 453-residue protein sequence, read N- to C-terminus: Collagen alpha-4(IV) chain (453 aa).

The interval Gly1–Pro218 is disordered. The tract at residues Gly1 to Gly222 is triple-helical region. 3 stretches are compositionally biased toward pro residues: residues Gln26 to Pro44, Pro60 to Pro72, and Pro95 to Pro122. Residues Pro153–Met162 show a composition bias toward low complexity. Residues Pro174–Asp183 show a composition bias toward basic and acidic residues. Pro residues predominate over residues Ala206–Asp215. Positions Gly228–Ser453 constitute a Collagen IV NC1 domain. Cystine bridges form between Cys243–Cys332, Cys276–Cys329, Cys288–Cys294, Cys351–Cys449, Cys385–Cys446, and Cys397–Cys404.

Belongs to the type IV collagen family. As to quaternary structure, there are six type IV collagen isoforms, alpha 1(IV)-alpha 6(IV), each of which can form a triple helix structure with 2 other chains to generate type IV collagen network. The alpha 3(IV) chain forms a triple helical protomer with alpha 4(IV) and alpha 5(IV); this triple helical structure dimerizes through NC1-NC1 domain interactions such that the alpha 3(IV), alpha 4(IV) and alpha 5(IV) chains of one protomer connect with the alpha 5(IV), alpha 4(IV) and alpha 3(IV) chains of the opposite protomer, respectively. Associates with LAMB2 at the neuromuscular junction and in GBM. Prolines at the third position of the tripeptide repeating unit (G-X-Y) are hydroxylated in some or all of the chains. In terms of processing, type IV collagens contain numerous cysteine residues which are involved in inter- and intramolecular disulfide bonding. 12 of these, located in the NC1 domain, are conserved in all known type IV collagens. Post-translationally, the trimeric structure of the NC1 domains is stabilized by covalent bonds between Lys and Met residues. As to expression, alpha 3 and alpha 4 type IV collagens are colocalized and present only in basement membranes of kidney, eye, cochlea, lung and brain.

It is found in the secreted. Its subcellular location is the extracellular space. The protein resides in the extracellular matrix. The protein localises to the basement membrane. Functionally, type IV collagen is the major structural component of glomerular basement membranes (GBM), forming a 'chicken-wire' meshwork together with laminins, proteoglycans and entactin/nidogen. The sequence is that of Collagen alpha-4(IV) chain (COL4A4) from Bos taurus (Bovine).